Reading from the N-terminus, the 443-residue chain is Ribosomal protein uS12 methylthiotransferase RimO (443 aa).

In terms of domain architecture, MTTase N-terminal spans 5-115 (PNIGFISLGC…VMQHVHKYVP (111 aa)). [4Fe-4S] cluster contacts are provided by Cys14, Cys50, Cys79, Cys147, Cys151, and Cys154. The region spanning 133-374 (LTPKHYAYLK…MQVQQRISVA (242 aa)) is the Radical SAM core domain. The TRAM domain occupies 377–443 (QQKIGKTLAI…ADEYDLWGTY (67 aa)).

It belongs to the methylthiotransferase family. RimO subfamily. The cofactor is [4Fe-4S] cluster.

The protein resides in the cytoplasm. It carries out the reaction L-aspartate(89)-[ribosomal protein uS12]-hydrogen + (sulfur carrier)-SH + AH2 + 2 S-adenosyl-L-methionine = 3-methylsulfanyl-L-aspartate(89)-[ribosomal protein uS12]-hydrogen + (sulfur carrier)-H + 5'-deoxyadenosine + L-methionine + A + S-adenosyl-L-homocysteine + 2 H(+). Catalyzes the methylthiolation of an aspartic acid residue of ribosomal protein uS12. This is Ribosomal protein uS12 methylthiotransferase RimO from Haemophilus ducreyi (strain 35000HP / ATCC 700724).